A 52-amino-acid polypeptide reads, in one-letter code: Large ribosomal subunit protein bL32c (52 aa).

The protein belongs to the bacterial ribosomal protein bL32 family.

The protein localises to the plastid. Its subcellular location is the chloroplast. In Aethionema grandiflorum (Persian stone-cress), this protein is Large ribosomal subunit protein bL32c.